The primary structure comprises 155 residues: FUN14 domain-containing protein 1 (155 aa).

Topologically, residues 1 to 47 are cytoplasmic; the sequence is MATRNPPPQDYESDDDSYEVLDLTEYARRHQWWNRVFGHSSGPMVEK. Position 13 is a phosphoserine; by CK2 (Ser-13). Phosphoserine; by ULK1 is present on Ser-17. At Tyr-18 the chain carries Phosphotyrosine; by SRC. A YXXL motif is present at residues 18 to 21; sequence YEVL. A helical membrane pass occupies residues 48–68; sequence YSVATQIVMGGVTGWCAGFLF. Over 69–74 the chain is Mitochondrial intermembrane; that stretch reads QKVGKL. The helical transmembrane segment at 75–95 threads the bilayer; the sequence is AATAVGGGFLLLQIASHSGYV. Topologically, residues 96-133 are cytoplasmic; that stretch reads QIDWKRVEKDVNKAKRQIKKRANKAAPEINNLIEEATE. Lys-119 participates in a covalent cross-link: Glycyl lysine isopeptide (Lys-Gly) (interchain with G-Cter in ubiquitin). Residues 134-154 traverse the membrane as a helical segment; sequence FIKQNIVISSGFVGGFLLGLA. Residue Ser-155 is a topological domain, mitochondrial intermembrane.

It belongs to the FUN14 family. In terms of assembly, interacts (via YXXL motif) with MAP1 LC3 family proteins MAP1LC3A, MAP1LC3B and GABARAP. Interacts with DNM1L/DPR1. Interacts with GPX4. Post-translationally, phosphorylation at Ser-13 by CK2 and at Tyr-18 by SRC inhibits activation of mitophagy. Following hypoxia, dephosphorylated at Tyr-18, leading to interaction with MAP1 LC3 family proteins and triggering mitophagy. Dephosphorylation is mediated by PGAM5. Phosphorylated by ULK1 at Ser-17 which enhances FUNDC1 binding to LC3. In terms of processing, ubiquitinated on Lys-119. Deubiquitinated by USP19; leading to hypoxia-induced DRP1 oligomerization and GTPase activity. Widely expressed.

It localises to the mitochondrion outer membrane. In terms of biological role, integral mitochondrial outer-membrane protein that mediates the formation of mitochondria-associated endoplasmic reticulum membranes (MAMs). In turn, mediates angiogenesis and neoangiogenesis through interference with intracellular Ca(2+) communication and regulation of the vascular endothelial growth factor receptor KDR/VEGFR2 expression at both mRNA and protein levels. Also acts as an activator of hypoxia-induced mitophagy, an important mechanism for mitochondrial quality and homeostasis, by interacting with and recruiting LC3 protein family to mitochondria. Mechanistically, recruits DRP1 at ER-mitochondria contact sites leading to DRP1 oligomerization and GTPase activity to facilitate mitochondrial fission during hypoxia. Additionally, plays a role in hepatic ferroptosis by interacting directly with glutathione peroxidase/GPX4 to facilitate its recruitment into mitochondria through TOM/TIM complex where it is degraded by mitophagy. This is FUN14 domain-containing protein 1 (FUNDC1) from Homo sapiens (Human).